We begin with the raw amino-acid sequence, 891 residues long: DNA mismatch repair protein MutS (891 aa).

Residue 639–646 (GPNMAGKS) coordinates ATP. A disordered region spans residues 827–854 (TIQEARPSAQGSEEKTPSSPAEKGLSLF).

It belongs to the DNA mismatch repair MutS family.

This protein is involved in the repair of mismatches in DNA. It is possible that it carries out the mismatch recognition step. This protein has a weak ATPase activity. This is DNA mismatch repair protein MutS from Treponema denticola (strain ATCC 35405 / DSM 14222 / CIP 103919 / JCM 8153 / KCTC 15104).